A 283-amino-acid chain; its full sequence is Putative aquaporin NIP4-1 (283 aa).

M1 carries the N-acetylmethionine modification. 2 helical membrane passes run 45–65 and 70–90; these read LIAEMIGTYFIVFSGCGVVVV and GGTITFPGICVTWGLIVMVMI. The short motif at 102 to 104 is the NPA 1 element; sequence NPA. The next 3 helical transmembrane spans lie at 122–142, 161–181, and 189–209; these read LYIGAQFAGSLLASLTLRLMF, ALVAEIIISFLLMFVISGVAT, and LAGIAVGMTIMVNVFVAGPIS. Positions 214-216 match the NPA 2 motif; it reads NPA. A helical transmembrane segment spans residues 231 to 251; that stretch reads IWVYIVGPVLGVISGGFVYNL. Position 267 is a phosphoserine (S267).

It belongs to the MIP/aquaporin (TC 1.A.8) family. NIP (TC 1.A.8.12) subfamily.

It is found in the membrane. Functionally, potential aquaporin, which may facilitate the transport of water and small neutral solutes across cell membranes. This Arabidopsis thaliana (Mouse-ear cress) protein is Putative aquaporin NIP4-1 (NIP4-1).